A 347-amino-acid chain; its full sequence is UDP-N-acetylenolpyruvoylglucosamine reductase (347 aa).

An FAD-binding PCMH-type domain is found at F24 to A195. The active site involves R171. S247 (proton donor) is an active-site residue. The active site involves E343.

The protein belongs to the MurB family. FAD is required as a cofactor.

The protein resides in the cytoplasm. The catalysed reaction is UDP-N-acetyl-alpha-D-muramate + NADP(+) = UDP-N-acetyl-3-O-(1-carboxyvinyl)-alpha-D-glucosamine + NADPH + H(+). It participates in cell wall biogenesis; peptidoglycan biosynthesis. Functionally, cell wall formation. In Burkholderia mallei (strain NCTC 10247), this protein is UDP-N-acetylenolpyruvoylglucosamine reductase.